The primary structure comprises 260 residues: F-actin-capping protein subunit beta (260 aa).

Belongs to the F-actin-capping protein beta subunit family. In terms of assembly, component of the F-actin capping complex, composed of a heterodimer of an alpha and a beta subunit.

Its subcellular location is the cytoplasm. The protein localises to the cytoskeleton. The protein resides in the actin patch. In terms of biological role, F-actin-capping proteins bind in a Ca(2+)-independent manner to the fast growing ends of actin filaments (barbed end) thereby blocking the exchange of subunits at these ends. Unlike other capping proteins (such as gelsolin and severin), these proteins do not sever actin filaments. This chain is F-actin-capping protein subunit beta (CAP2), found in Yarrowia lipolytica (strain CLIB 122 / E 150) (Yeast).